A 308-amino-acid polypeptide reads, in one-letter code: MAWQQLHLQCEKDNVDLAEALLLEAGALSIALDDAGDQPLFEPLPGESPLWDEVILTGLFDATIETGTRDVIEQLSHEIAAQVQASRSWVSAVDDKDWEREWMSNYKPIECANDLWIVPNWLTPPNPEATNIIMDPGLAFGTGYHATTRLCLDWLTEQDLTDKVVIDYGCGSGILGIAALLLGARHVYAVDIDPQAVLATNQNAARNSVDNRLQAFLPEDFTAFWQQQNIAPVAVMVANILAKPLIGLAPYFVTLMAPKSRIVLAGLIESQTEQVTEAYQPYFALDPKHAFTAQEDQHWQRLSGTFTG.

Threonine 148, glycine 169, aspartate 191, and asparagine 239 together coordinate S-adenosyl-L-methionine.

This sequence belongs to the methyltransferase superfamily. PrmA family.

The protein localises to the cytoplasm. It carries out the reaction L-lysyl-[protein] + 3 S-adenosyl-L-methionine = N(6),N(6),N(6)-trimethyl-L-lysyl-[protein] + 3 S-adenosyl-L-homocysteine + 3 H(+). Its function is as follows. Methylates ribosomal protein L11. This Psychrobacter cryohalolentis (strain ATCC BAA-1226 / DSM 17306 / VKM B-2378 / K5) protein is Ribosomal protein L11 methyltransferase.